The chain runs to 864 residues: DNA mismatch repair protein MutS (864 aa).

Residue 607–614 (GPNMGGKS) participates in ATP binding.

This sequence belongs to the DNA mismatch repair MutS family.

Functionally, this protein is involved in the repair of mismatches in DNA. It is possible that it carries out the mismatch recognition step. This protein has a weak ATPase activity. This Neisseria meningitidis serogroup B (strain ATCC BAA-335 / MC58) protein is DNA mismatch repair protein MutS.